A 240-amino-acid chain; its full sequence is Citrate synthase-lysine N-methyltransferase CSKMT, mitochondrial (240 aa).

The N-terminal 21 residues, 1–21 (MAALRRMLHLPRLTMGTCRPF), are a transit peptide targeting the mitochondrion.

Belongs to the methyltransferase superfamily.

It is found in the mitochondrion. The catalysed reaction is L-lysyl-[citrate synthase] + S-adenosyl-L-methionine = N(6)-methyl-L-lysyl-[citrate synthase] + S-adenosyl-L-homocysteine + H(+). It carries out the reaction N(6)-methyl-L-lysyl-[citrate synthase] + S-adenosyl-L-methionine = N(6),N(6)-dimethyl-L-lysyl-[citrate synthase] + S-adenosyl-L-homocysteine + H(+). It catalyses the reaction N(6),N(6)-dimethyl-L-lysyl-[citrate synthase] + S-adenosyl-L-methionine = N(6),N(6),N(6)-trimethyl-L-lysyl-[citrate synthase] + S-adenosyl-L-homocysteine + H(+). With respect to regulation, citrate synthase-lysine methyltransferase activity is inhibited by S-adenosylhomocysteine (AdoHcy) and oxaloacetate (OAA). In terms of biological role, protein-lysine methyltransferase that selectively trimethylates citrate synthase (CS) in mitochondria. Seems to conduct trimethylation in a highly distributive manner rather than in a processive manner, and thus introduces a single methyl group per binding event. The protein is Citrate synthase-lysine N-methyltransferase CSKMT, mitochondrial of Pongo abelii (Sumatran orangutan).